The primary structure comprises 185 residues: Segregation and condensation protein B (185 aa).

It belongs to the ScpB family. As to quaternary structure, homodimer. Homodimerization may be required to stabilize the binding of ScpA to the Smc head domains. Component of a cohesin-like complex composed of ScpA, ScpB and the Smc homodimer, in which ScpA and ScpB bind to the head domain of Smc. The presence of the three proteins is required for the association of the complex with DNA.

The protein resides in the cytoplasm. In terms of biological role, participates in chromosomal partition during cell division. May act via the formation of a condensin-like complex containing Smc and ScpA that pull DNA away from mid-cell into both cell halves. The protein is Segregation and condensation protein B of Alkaliphilus oremlandii (strain OhILAs) (Clostridium oremlandii (strain OhILAs)).